Reading from the N-terminus, the 510-residue chain is Arginine biosynthesis bifunctional protein ArgJ, mitochondrial (510 aa).

Polar residues predominate over residues 57–70; the sequence is TSTNEPSAATTNVP. Residues 57–76 form a disordered region; sequence TSTNEPSAATTNVPHPQEAP. Substrate-binding residues include Thr-222, Lys-248, Thr-267, and Glu-364. Thr-267 serves as the catalytic Nucleophile.

This sequence belongs to the ArgJ family. As to quaternary structure, heterodimer of an alpha and a beta chain. In terms of processing, the alpha and beta chains are autoproteolytically processed from a single precursor protein within the mitochondrion.

Its subcellular location is the mitochondrion matrix. It carries out the reaction N(2)-acetyl-L-ornithine + L-glutamate = N-acetyl-L-glutamate + L-ornithine. The enzyme catalyses L-glutamate + acetyl-CoA = N-acetyl-L-glutamate + CoA + H(+). The protein operates within amino-acid biosynthesis; L-arginine biosynthesis; L-ornithine and N-acetyl-L-glutamate from L-glutamate and N(2)-acetyl-L-ornithine (cyclic): step 1/1. Its pathway is amino-acid biosynthesis; L-arginine biosynthesis; N(2)-acetyl-L-ornithine from L-glutamate: step 1/4. In terms of biological role, catalyzes two activities which are involved in the cyclic version of arginine biosynthesis: the synthesis of acetylglutamate from glutamate and acetyl-CoA, and of ornithine by transacetylation between acetylornithine and glutamate. The chain is Arginine biosynthesis bifunctional protein ArgJ, mitochondrial from Malassezia globosa (strain ATCC MYA-4612 / CBS 7966) (Dandruff-associated fungus).